A 214-amino-acid polypeptide reads, in one-letter code: Large ribosomal subunit protein uL3 (214 aa).

N5-methylglutamine is present on Gln-155.

Belongs to the universal ribosomal protein uL3 family. As to quaternary structure, part of the 50S ribosomal subunit. Forms a cluster with proteins L14 and L19. In terms of processing, methylated by PrmB.

One of the primary rRNA binding proteins, it binds directly near the 3'-end of the 23S rRNA, where it nucleates assembly of the 50S subunit. This Acinetobacter baumannii (strain ACICU) protein is Large ribosomal subunit protein uL3.